The primary structure comprises 154 residues: Probable cyclic pyranopterin monophosphate synthase (154 aa).

Substrate-binding positions include 74–76 and 110–111; these read LCH and ME. Aspartate 125 is an active-site residue.

The protein belongs to the MoaC family. In terms of assembly, homohexamer; trimer of dimers.

It catalyses the reaction (8S)-3',8-cyclo-7,8-dihydroguanosine 5'-triphosphate = cyclic pyranopterin phosphate + diphosphate. It participates in cofactor biosynthesis; molybdopterin biosynthesis. In terms of biological role, catalyzes the conversion of (8S)-3',8-cyclo-7,8-dihydroguanosine 5'-triphosphate to cyclic pyranopterin monophosphate (cPMP). In Methanosphaerula palustris (strain ATCC BAA-1556 / DSM 19958 / E1-9c), this protein is Probable cyclic pyranopterin monophosphate synthase.